Consider the following 650-residue polypeptide: Threonine--tRNA ligase (650 aa).

The region spanning 1-66 (MVQITLPDGS…EHDAQLAIVT (66 aa)) is the TGS domain. Positions 247-538 (DHRKIGRDLD…LIENHAGAMP (292 aa)) are catalytic. The Zn(2+) site is built by Cys-338, His-389, and His-515.

It belongs to the class-II aminoacyl-tRNA synthetase family. In terms of assembly, homodimer. Zn(2+) serves as cofactor.

It is found in the cytoplasm. The catalysed reaction is tRNA(Thr) + L-threonine + ATP = L-threonyl-tRNA(Thr) + AMP + diphosphate + H(+). Catalyzes the attachment of threonine to tRNA(Thr) in a two-step reaction: L-threonine is first activated by ATP to form Thr-AMP and then transferred to the acceptor end of tRNA(Thr). Also edits incorrectly charged L-seryl-tRNA(Thr). This chain is Threonine--tRNA ligase, found in Bordetella petrii (strain ATCC BAA-461 / DSM 12804 / CCUG 43448).